The chain runs to 474 residues: AAA-ATPase At3g28610 (474 aa).

The first 25 residues, 1–25 (MMGNMFGSSLASLFFLWATIQQIFP), serve as a signal peptide directing secretion. 244–251 (GPPGTGKS) contacts ATP.

Belongs to the AAA ATPase family. BCS1 subfamily. It depends on Mg(2+) as a cofactor.

The catalysed reaction is ATP + H2O = ADP + phosphate + H(+). The polypeptide is AAA-ATPase At3g28610 (Arabidopsis thaliana (Mouse-ear cress)).